Reading from the N-terminus, the 308-residue chain is D-alanine--D-alanine ligase (308 aa).

An ATP-grasp domain is found at 104–301 (KQIWQGSDLP…FDELCVAILE (198 aa)). 130-185 (IAELGLPVIIKPVHEGSSVGMSKVEKAEDFAAAIEKATQHDAVVMAEKWITGREFT) lines the ATP pocket. Mg(2+) contacts are provided by D255, E268, and N270.

This sequence belongs to the D-alanine--D-alanine ligase family. Mg(2+) serves as cofactor. The cofactor is Mn(2+).

The protein localises to the cytoplasm. It carries out the reaction 2 D-alanine + ATP = D-alanyl-D-alanine + ADP + phosphate + H(+). The protein operates within cell wall biogenesis; peptidoglycan biosynthesis. In terms of biological role, cell wall formation. This is D-alanine--D-alanine ligase from Acinetobacter baumannii (strain SDF).